The primary structure comprises 273 residues: ATP synthase subunit a (273 aa).

5 helical membrane-spanning segments follow: residues 42 to 62 (TLNIDSLFFSVVLGALFLFIF), 102 to 122 (VIAPLALTVFVWVFLMNMMDL), 148 to 168 (DVSITLSMALGVFILILFYSI), 213 to 233 (LFGNMYAGELIFILIAGLLPW), and 244 to 264 (AIFHILIITLQAFIFMVLTIV).

Belongs to the ATPase A chain family. In terms of assembly, F-type ATPases have 2 components, CF(1) - the catalytic core - and CF(0) - the membrane proton channel. CF(1) has five subunits: alpha(3), beta(3), gamma(1), delta(1), epsilon(1). CF(0) has three main subunits: a(1), b(2) and c(9-12). The alpha and beta chains form an alternating ring which encloses part of the gamma chain. CF(1) is attached to CF(0) by a central stalk formed by the gamma and epsilon chains, while a peripheral stalk is formed by the delta and b chains.

It is found in the cell inner membrane. Key component of the proton channel; it plays a direct role in the translocation of protons across the membrane. In Serratia proteamaculans (strain 568), this protein is ATP synthase subunit a.